The sequence spans 71 residues: UPF0434 protein Meso_3270 (71 aa).

The protein belongs to the UPF0434 family.

The chain is UPF0434 protein Meso_3270 from Chelativorans sp. (strain BNC1).